We begin with the raw amino-acid sequence, 81 residues long: Photosystem I iron-sulfur center (81 aa).

4Fe-4S ferredoxin-type domains follow at residues 2 to 31 (SHSVKIYDTCIGCTQCVRACPTDVLEMIPW) and 39 to 68 (IASAPRTEDCVGCKRCESACPTDFLSVRVY). [4Fe-4S] cluster contacts are provided by cysteine 11, cysteine 14, cysteine 17, cysteine 21, cysteine 48, cysteine 51, cysteine 54, and cysteine 58.

The eukaryotic PSI reaction center is composed of at least 11 subunits. Requires [4Fe-4S] cluster as cofactor.

The protein resides in the plastid thylakoid membrane. It catalyses the reaction reduced [plastocyanin] + hnu + oxidized [2Fe-2S]-[ferredoxin] = oxidized [plastocyanin] + reduced [2Fe-2S]-[ferredoxin]. Apoprotein for the two 4Fe-4S centers FA and FB of photosystem I (PSI); essential for photochemical activity. FB is the terminal electron acceptor of PSI, donating electrons to ferredoxin. The C-terminus interacts with PsaA/B/D and helps assemble the protein into the PSI complex. Required for binding of PsaD and PsaE to PSI. PSI is a plastocyanin-ferredoxin oxidoreductase, converting photonic excitation into a charge separation, which transfers an electron from the donor P700 chlorophyll pair to the spectroscopically characterized acceptors A0, A1, FX, FA and FB in turn. This chain is Photosystem I iron-sulfur center, found in Cuscuta gronovii (Common dodder).